A 221-amino-acid polypeptide reads, in one-letter code: ATP-dependent dethiobiotin synthetase BioD (221 aa).

13-18 (DIGKTY) lines the ATP pocket. T17 provides a ligand contact to Mg(2+). K38 is a catalytic residue. Residue S42 participates in substrate binding. Residues D51, 112–115 (EGSG), and 176–177 (NR) contribute to the ATP site. D51 and E112 together coordinate Mg(2+).

The protein belongs to the dethiobiotin synthetase family. In terms of assembly, homodimer. The cofactor is Mg(2+).

Its subcellular location is the cytoplasm. It catalyses the reaction (7R,8S)-7,8-diammoniononanoate + CO2 + ATP = (4R,5S)-dethiobiotin + ADP + phosphate + 3 H(+). It participates in cofactor biosynthesis; biotin biosynthesis; biotin from 7,8-diaminononanoate: step 1/2. Catalyzes a mechanistically unusual reaction, the ATP-dependent insertion of CO2 between the N7 and N8 nitrogen atoms of 7,8-diaminopelargonic acid (DAPA, also called 7,8-diammoniononanoate) to form a ureido ring. This Brachyspira hyodysenteriae (strain ATCC 49526 / WA1) protein is ATP-dependent dethiobiotin synthetase BioD.